The chain runs to 218 residues: Small ribosomal subunit protein uS3 (218 aa).

In terms of domain architecture, KH type-2 spans 38 to 106 (IREYISKRLS…RVHINILEIK (69 aa)).

It belongs to the universal ribosomal protein uS3 family. As to quaternary structure, part of the 30S ribosomal subunit. Forms a tight complex with proteins S10 and S14.

Binds the lower part of the 30S subunit head. Binds mRNA in the 70S ribosome, positioning it for translation. This chain is Small ribosomal subunit protein uS3, found in Bacillus subtilis (strain 168).